The following is a 93-amino-acid chain: Small ribosomal subunit protein uS19 (93 aa).

The protein belongs to the universal ribosomal protein uS19 family.

Functionally, protein S19 forms a complex with S13 that binds strongly to the 16S ribosomal RNA. The protein is Small ribosomal subunit protein uS19 of Caldanaerobacter subterraneus subsp. tengcongensis (strain DSM 15242 / JCM 11007 / NBRC 100824 / MB4) (Thermoanaerobacter tengcongensis).